A 373-amino-acid chain; its full sequence is GTP cyclohydrolase 1 type 2 homolog (373 aa).

H67, H68, D106, H333, and E336 together coordinate a divalent metal cation.

This sequence belongs to the GTP cyclohydrolase I type 2/NIF3 family. As to quaternary structure, homohexamer.

The sequence is that of GTP cyclohydrolase 1 type 2 homolog from Listeria innocua serovar 6a (strain ATCC BAA-680 / CLIP 11262).